A 37-amino-acid chain; its full sequence is Large ribosomal subunit protein bL36 (37 aa).

Belongs to the bacterial ribosomal protein bL36 family.

This is Large ribosomal subunit protein bL36 from Desulforapulum autotrophicum (strain ATCC 43914 / DSM 3382 / VKM B-1955 / HRM2) (Desulfobacterium autotrophicum).